The sequence spans 204 residues: Ribosomal RNA small subunit methyltransferase G (204 aa).

Residues Gly73, Phe78, and Arg139 each coordinate S-adenosyl-L-methionine.

Belongs to the methyltransferase superfamily. RNA methyltransferase RsmG family.

It is found in the cytoplasm. The enzyme catalyses guanosine(527) in 16S rRNA + S-adenosyl-L-methionine = N(7)-methylguanosine(527) in 16S rRNA + S-adenosyl-L-homocysteine. Functionally, specifically methylates the N7 position of guanine in position 527 of 16S rRNA. This is Ribosomal RNA small subunit methyltransferase G from Coxiella burnetii (strain RSA 331 / Henzerling II).